The sequence spans 262 residues: PsbP domain-containing protein 6, chloroplastic (262 aa).

A disulfide bridge connects residues C128 and C132.

Belongs to the PsbP family.

It is found in the plastid. It localises to the chloroplast thylakoid lumen. Its function is as follows. May be involved in the redox regulation of photosystem II. The protein is PsbP domain-containing protein 6, chloroplastic (PPD6) of Arabidopsis thaliana (Mouse-ear cress).